The chain runs to 129 residues: Natriuretic peptides B (129 aa).

Positions 1–26 (MDPQKALSRTLLLLLFLHLSLLGCRS) are cleaved as a signal peptide. A disulfide bridge connects residues cysteine 107 and cysteine 123.

Belongs to the natriuretic peptide family. The precursor molecule is proteolytically cleaved, possibly by FURIN or CORIN, to produce the active peptide. May undergo further proteolytic cleavage by various proteases such as DPP4, MME and possibly FAP, to give rise to a variety of shorter peptides. May be cleaved at Pro-99 by the prolyl endopeptidase FAP (seprase) activity (in vitro). May be degraded by IDE. During IDE degradation, the resulting products initially increase the activation of NPR1 and can also stimulate NPR2 to produce cGMP before the fragments are completely degraded and inactivated by IDE (in vitro).

It localises to the secreted. Functionally, cardiac hormone that plays a key role in mediating cardio-renal homeostasis. May also function as a paracrine antifibrotic factor in the heart. Acts by specifically binding and stimulating NPR1 to produce cGMP, which in turn activates effector proteins that drive various biological responses. Involved in regulating the extracellular fluid volume and maintaining the fluid-electrolyte balance through natriuresis, diuresis, vasorelaxation, and inhibition of renin and aldosterone secretion. Binds the clearance receptor NPR3. The chain is Natriuretic peptides B (NPPB) from Ovis aries (Sheep).